Here is a 941-residue protein sequence, read N- to C-terminus: Glycine dehydrogenase (decarboxylating) (941 aa).

Residue K692 is modified to N6-(pyridoxal phosphate)lysine.

The protein belongs to the GcvP family. As to quaternary structure, the glycine cleavage system is composed of four proteins: P, T, L and H. Requires pyridoxal 5'-phosphate as cofactor.

The catalysed reaction is N(6)-[(R)-lipoyl]-L-lysyl-[glycine-cleavage complex H protein] + glycine + H(+) = N(6)-[(R)-S(8)-aminomethyldihydrolipoyl]-L-lysyl-[glycine-cleavage complex H protein] + CO2. The glycine cleavage system catalyzes the degradation of glycine. The P protein binds the alpha-amino group of glycine through its pyridoxal phosphate cofactor; CO(2) is released and the remaining methylamine moiety is then transferred to the lipoamide cofactor of the H protein. The sequence is that of Glycine dehydrogenase (decarboxylating) from Mycobacterium tuberculosis (strain ATCC 25177 / H37Ra).